Consider the following 367-residue polypeptide: D-alanine--D-alanine ligase (367 aa).

Residues Lys-145–Ala-351 enclose the ATP-grasp domain. ATP is bound at residue Arg-174–Ile-229. Mg(2+)-binding residues include Asp-306, Glu-318, and Asn-320.

The protein belongs to the D-alanine--D-alanine ligase family. The cofactor is Mg(2+). It depends on Mn(2+) as a cofactor.

It localises to the cytoplasm. It carries out the reaction 2 D-alanine + ATP = D-alanyl-D-alanine + ADP + phosphate + H(+). The protein operates within cell wall biogenesis; peptidoglycan biosynthesis. Its function is as follows. Cell wall formation. The sequence is that of D-alanine--D-alanine ligase from Bradyrhizobium sp. (strain ORS 278).